We begin with the raw amino-acid sequence, 299 residues long: MSEPIDLSQIAPTLKAEILAEALPYIRRYHGKTVVIKYGGNAMTEERLKQGFARDVILLKLVGINPVIVHGGGPQIDHALKKIGKAGTFIQGMRVTDEETMEVVEWVLGGEVQQDIVMLINHFGGHAVGLTGKDGGLIHARKLLMPDRDNPGQYIDIGQVGEVEAINPAVVKALQDDAFIPVISPIGFGEDGLSYNINADLVAGKLATVLNAEKLLMMTNIPGVMDKDGNLLTDLSAREIDALFEDGTISGGMLPKISSALDAAKSGVKSVHIVDGRIEHSVLLEILTDQPFGTMIRSH.

Substrate contacts are provided by residues 72-73, Arg-94, and Asn-196; that span reads GG.

This sequence belongs to the acetylglutamate kinase family. ArgB subfamily.

The protein localises to the cytoplasm. The enzyme catalyses N-acetyl-L-glutamate + ATP = N-acetyl-L-glutamyl 5-phosphate + ADP. Its pathway is amino-acid biosynthesis; L-arginine biosynthesis; N(2)-acetyl-L-ornithine from L-glutamate: step 2/4. Its function is as follows. Catalyzes the ATP-dependent phosphorylation of N-acetyl-L-glutamate. This Burkholderia vietnamiensis (strain G4 / LMG 22486) (Burkholderia cepacia (strain R1808)) protein is Acetylglutamate kinase.